Here is a 43-residue protein sequence, read N- to C-terminus: Hemolysin H1U (43 aa).

N-formylmethionine is present on M1.

This sequence belongs to the staphylococcal hemolytic protein family.

The protein localises to the secreted. Functionally, virulence factor. Causes hemolysis of erythrocytes. Acts synergistically with beta-hemolysins from S.aureus ATCC 25923. Cytotoxic towards human dermal fibroblasts. The protein is Hemolysin H1U of Staphylococcus ureilyticus (Staphylococcus cohnii subsp. urealyticus).